Consider the following 604-residue polypeptide: Glucose oxidase 2 (604 aa).

The signal sequence occupies residues 1 to 16 (MKLLGLLSGLVVVATA). FAD contacts are provided by Leu49 and Thr50. Asn63 is a glycosylation site (N-linked (GlcNAc...) asparagine). Position 70 (Glu70) interacts with FAD. An N-linked (GlcNAc...) asparagine glycan is attached at Asn109. FAD contacts are provided by Ser123, Asn127, Gly128, and Ser130. Residues Cys184 and Cys226 are joined by a disulfide bond. N-linked (GlcNAc...) asparagine glycosylation is present at Asn214. FAD is bound at residue Val270. Asn375, Asn408, and Asn517 each carry an N-linked (GlcNAc...) asparagine glycan. The active-site Proton acceptor is His536. 2 residues coordinate O2: Arg557 and Val558. The FAD site is built by Gly569 and Met581. A glycan (N-linked (GlcNAc...) asparagine) is linked at Asn600.

This sequence belongs to the GMC oxidoreductase family. As to quaternary structure, homodimer. Requires FAD as cofactor.

The protein resides in the secreted. The protein localises to the cell wall. It localises to the cytoplasm. Its subcellular location is the extracellular space. It is found in the extracellular matrix. It catalyses the reaction beta-D-glucose + O2 = D-glucono-1,5-lactone + H2O2. In terms of biological role, glucose oxidase catalyzes the oxidation of beta-D-glucose to D-glucono-delta-lactone and hydrogen peroxide in the presence of molecular oxygen. D-glucono-delta-lactone is sequentially hydrolyzed by lactonase to D-gluconic acid, and the resulting hydrogen peroxide is hydrolyzed by catalase to oxygen and water. Acts as a key factor contributing to fungal disease of apple. The production of gluconic acid leads to host tissue acidification that enhances the expression of pectolytic enzymes and the establishment of conditions for necrotrophic development of P.expansum. The polypeptide is Glucose oxidase 2 (Penicillium expansum (Blue mold rot fungus)).